A 623-amino-acid polypeptide reads, in one-letter code: Sphingomyelinase C 2 (623 aa).

The first 25 residues, Met1 to Leu25, serve as a signal peptide directing secretion. 2 stretches are compositionally biased toward low complexity: residues Val51–Ala61 and Asn67–Pro80. The segment at Val51–Ala121 is disordered. The segment covering Asn89–Asn102 has biased composition (polar residues). A compositionally biased stretch (low complexity) spans Pro110–Ala121.

It localises to the secreted. The catalysed reaction is a sphingomyelin + H2O = phosphocholine + an N-acylsphing-4-enine + H(+). In Leptospira interrogans serogroup Icterohaemorrhagiae serovar Lai (strain 56601), this protein is Sphingomyelinase C 2 (sph2).